The primary structure comprises 62 residues: MANAKTIKVTLTRSPIGCQPKHKLCVKGLGLRKIGHTVEVEDTPSIRGMINRVNYLVRVEEN.

It belongs to the universal ribosomal protein uL30 family. In terms of assembly, part of the 50S ribosomal subunit.

The chain is Large ribosomal subunit protein uL30 from Marinobacter nauticus (strain ATCC 700491 / DSM 11845 / VT8) (Marinobacter aquaeolei).